Here is a 103-residue protein sequence, read N- to C-terminus: MITKDKIRVRLFSFDVKILDQSAESIVRAVQKSKTQIKGPIPLPTKIKKYTVLRSPHVNKKSREQFEMRTHKRLIDILEPTSALMDSLMKLELPAGVEVDIKQ.

It belongs to the universal ribosomal protein uS10 family. In terms of assembly, part of the 30S ribosomal subunit.

Functionally, involved in the binding of tRNA to the ribosomes. This chain is Small ribosomal subunit protein uS10, found in Borrelia recurrentis (strain A1).